The primary structure comprises 250 residues: Probable dihydroorotate dehydrogenase B (NAD(+)), electron transfer subunit (250 aa).

One can recognise an FAD-binding FR-type domain in the interval 1–89; it reads MNRITVDQVR…RGPYGNGFQI (89 aa). Positions 200, 205, 208, and 216 each coordinate [2Fe-2S] cluster.

The protein belongs to the PyrK family. As to quaternary structure, heterotetramer of 2 PyrK and 2 PyrD type B subunits. The cofactor is [2Fe-2S] cluster. It depends on FAD as a cofactor.

It functions in the pathway pyrimidine metabolism; UMP biosynthesis via de novo pathway; orotate from (S)-dihydroorotate (NAD(+) route): step 1/1. In terms of biological role, responsible for channeling the electrons from the oxidation of dihydroorotate from the FMN redox center in the PyrD type B subunit to the ultimate electron acceptor NAD(+). The protein is Probable dihydroorotate dehydrogenase B (NAD(+)), electron transfer subunit of Thermoplasma acidophilum (strain ATCC 25905 / DSM 1728 / JCM 9062 / NBRC 15155 / AMRC-C165).